The chain runs to 239 residues: Protein GrpE (239 aa).

2 disordered regions span residues 1–50 (MIEN…INTE) and 209–239 (MGHG…SEDV). Residues 16–30 (VLNQDNAPEDNSSAA) are compositionally biased toward polar residues. Positions 218-239 (EEVEKDTVEEDIDSEENTSEDV) are enriched in acidic residues.

Belongs to the GrpE family. In terms of assembly, homodimer.

The protein resides in the cytoplasm. Participates actively in the response to hyperosmotic and heat shock by preventing the aggregation of stress-denatured proteins, in association with DnaK and GrpE. It is the nucleotide exchange factor for DnaK and may function as a thermosensor. Unfolded proteins bind initially to DnaJ; upon interaction with the DnaJ-bound protein, DnaK hydrolyzes its bound ATP, resulting in the formation of a stable complex. GrpE releases ADP from DnaK; ATP binding to DnaK triggers the release of the substrate protein, thus completing the reaction cycle. Several rounds of ATP-dependent interactions between DnaJ, DnaK and GrpE are required for fully efficient folding. This Prochlorococcus marinus (strain MIT 9312) protein is Protein GrpE.